The primary structure comprises 20 residues: Hemocyanin subunit Ib (20 aa).

Residues 1–20 are disordered; it reads DSVGSTTAHKQQNINHLLDK.

It belongs to the tyrosinase family. Hemocyanin subfamily. Composed of 3 major subunits (IB, II and III) and 1 minor subunit (IA) which form homohexamers and heterohexamers. May also form larger structures. In terms of tissue distribution, hemolymph.

The protein resides in the secreted. Its subcellular location is the extracellular space. Hemocyanins are copper-containing oxygen carriers occurring freely dissolved in the hemolymph of many mollusks and arthropods. The sequence is that of Hemocyanin subunit Ib from Panulirus japonicus (Japanese spiny lobster).